We begin with the raw amino-acid sequence, 146 residues long: MSEIKRLEINYKTDELFENFRAFGNKDLYMVNELNGQMIDASSDSPFYGIFVGDQLGARMALLKKGDVEEIYFPDFEDYILLWKLEVLPKYQNRGYASELIDFAKSFNMPIKAIGRNDSKDFFLHHGFTDVEAKNIEGHDVLLWKP.

Residues 7 to 146 form the N-acetyltransferase domain; it reads LEINYKTDEL…EGHDVLLWKP (140 aa).

This is an uncharacterized protein from Staphylococcus aureus (strain COL).